We begin with the raw amino-acid sequence, 498 residues long: ATP synthase subunit beta, chloroplastic (498 aa).

Residue 172 to 179 (GGAGVGKT) coordinates ATP.

Belongs to the ATPase alpha/beta chains family. F-type ATPases have 2 components, CF(1) - the catalytic core - and CF(0) - the membrane proton channel. CF(1) has five subunits: alpha(3), beta(3), gamma(1), delta(1), epsilon(1). CF(0) has four main subunits: a(1), b(1), b'(1) and c(9-12).

It is found in the plastid. The protein localises to the chloroplast thylakoid membrane. It catalyses the reaction ATP + H2O + 4 H(+)(in) = ADP + phosphate + 5 H(+)(out). Produces ATP from ADP in the presence of a proton gradient across the membrane. The catalytic sites are hosted primarily by the beta subunits. The sequence is that of ATP synthase subunit beta, chloroplastic from Nicotiana rustica (Aztec tobacco).